The primary structure comprises 255 residues: NAP1-related protein 2 (255 aa).

Positions 19-60 form a coiled coil; that stretch reads IDAELVLSIEKLQEIQDDLEKINEKASDEVLEVEQKYNVIRK. The segment at 213 to 255 is disordered; that stretch reads NPLTYFNNDADEEDFDGDDDGDEEEKEGDSDEDDDEEDEVGEE. The span at 221–255 shows a compositional bias: acidic residues; it reads DADEEDFDGDDDGDEEEKEGDSDEDDDEEDEVGEE.

Belongs to the nucleosome assembly protein (NAP) family. As to quaternary structure, can form homomeric and heteromeric protein complexes with NRP1. Binds histones H2A and H2B and associates with chromatin in vivo. As to expression, ubiquitous.

The protein localises to the cytoplasm. It is found in the nucleus. Functionally, acts as a histone H2A/H2B chaperone in nucleosome assembly, playing a critical role for the correct expression of genes involved in root proliferation and patterning. Required with NRP1 for the maintenance of cell proliferation and differentiation in postembryonic root growth. Involved in both intramolecular and intermolecular somatic homologous recombination. The polypeptide is NAP1-related protein 2 (NRP2) (Arabidopsis thaliana (Mouse-ear cress)).